Reading from the N-terminus, the 183-residue chain is Large ribosomal subunit protein bL17 (183 aa).

Basic and acidic residues predominate over residues 130 to 150 (GTKFAKDEKAKAEATEAKAEE). Positions 130–183 (GTKFAKDEKAKAEATEAKAEETTETTESTEAESTEAPAEEAKAEDTAAEKKDES) are disordered. The span at 151-162 (TTETTESTEAES) shows a compositional bias: acidic residues. A compositionally biased stretch (basic and acidic residues) spans 168–183 (EEAKAEDTAAEKKDES).

It belongs to the bacterial ribosomal protein bL17 family. As to quaternary structure, part of the 50S ribosomal subunit. Contacts protein L32.

The polypeptide is Large ribosomal subunit protein bL17 (Saccharopolyspora erythraea (strain ATCC 11635 / DSM 40517 / JCM 4748 / NBRC 13426 / NCIMB 8594 / NRRL 2338)).